The sequence spans 475 residues: Ribulose bisphosphate carboxylase large chain (475 aa).

Positions 1–2 (MS) are excised as a propeptide. N-acetylproline is present on Pro3. Lys14 is modified (N6,N6,N6-trimethyllysine). 2 residues coordinate substrate: Asn123 and Thr173. Catalysis depends on Lys175, which acts as the Proton acceptor. Lys177 is a binding site for substrate. Mg(2+)-binding residues include Lys201, Asp203, and Glu204. Lys201 is modified (N6-carboxylysine). His294 serves as the catalytic Proton acceptor. Residues Arg295, His327, and Ser379 each contribute to the substrate site.

The protein belongs to the RuBisCO large chain family. Type I subfamily. Heterohexadecamer of 8 large chains and 8 small chains; disulfide-linked. The disulfide link is formed within the large subunit homodimers. Mg(2+) serves as cofactor. Post-translationally, the disulfide bond which can form in the large chain dimeric partners within the hexadecamer appears to be associated with oxidative stress and protein turnover.

It is found in the plastid. The protein resides in the chloroplast. The enzyme catalyses 2 (2R)-3-phosphoglycerate + 2 H(+) = D-ribulose 1,5-bisphosphate + CO2 + H2O. It catalyses the reaction D-ribulose 1,5-bisphosphate + O2 = 2-phosphoglycolate + (2R)-3-phosphoglycerate + 2 H(+). Its function is as follows. RuBisCO catalyzes two reactions: the carboxylation of D-ribulose 1,5-bisphosphate, the primary event in carbon dioxide fixation, as well as the oxidative fragmentation of the pentose substrate in the photorespiration process. Both reactions occur simultaneously and in competition at the same active site. This chain is Ribulose bisphosphate carboxylase large chain, found in Citrus sinensis (Sweet orange).